The following is a 1839-amino-acid chain: Mannuronan C5-epimerase AlgE3 (1839 aa).

PbH1 repeat units follow at residues Asp133–Glu155, Thr157–Tyr179, Gln180–Thr202, Thr204–Arg226, Thr257–Gly279, Ala280–Val302, Thr320–Glu342, and Thr347–Gly369. Over residues Ser372 to Leu386 the composition is skewed to polar residues. The disordered stretch occupies residues Ser372–Asn392. Hemolysin-type calcium-binding repeat units lie at residues Glu387–Gly399, Gly406–Leu422, Gly424–Phe440, Thr538–Asp550, Gly557–Leu573, Val574–Phe591, Glu695–Asp709, Gly714–Leu730, and Gly732–Phe748. PbH1 repeat units follow at residues Asp975–Glu997, Thr999–Tyr1021, Leu1022–Thr1044, Thr1046–Arg1068, Thr1099–Gly1121, Thr1122–Glu1143, Thr1161–Glu1183, and Thr1188–Gly1210. The segment covering Val1215–Leu1236 has biased composition (polar residues). The interval Val1215–Gly1238 is disordered. 10 Hemolysin-type calcium-binding repeats span residues Gly1229–Glu1243, Gly1247–Leu1263, Gly1265–Phe1281, Gly1398–Leu1414, Val1415–Phe1432, Glu1536–Val1552, His1554–Phe1571, Gly1670–Ser1681, Gly1688–Leu1704, and Gly1706–Phe1722.

The protein belongs to the D-mannuronate C5-epimerase family. Ca(2+) is required as a cofactor.

It localises to the secreted. It catalyses the reaction [(1-&gt;4)-beta-D-mannuronosyl](n) = [alginate](n). The protein operates within glycan biosynthesis; alginate biosynthesis. Its activity is regulated as follows. Inhibited by zinc. In terms of biological role, converts beta-D-mannuronic acid (M) to alpha-L-guluronic acid (G), producing a polymer with gel-forming capacity, required for the formation of the cyst coat. In Azotobacter vinelandii, this protein is Mannuronan C5-epimerase AlgE3.